We begin with the raw amino-acid sequence, 463 residues long: Phosphoglucosamine mutase (463 aa).

Catalysis depends on Ser108, which acts as the Phosphoserine intermediate. Mg(2+) contacts are provided by Ser108, Asp247, Asp249, and Asp251. Ser108 is modified (phosphoserine).

This sequence belongs to the phosphohexose mutase family. Requires Mg(2+) as cofactor. Post-translationally, activated by phosphorylation.

It catalyses the reaction alpha-D-glucosamine 1-phosphate = D-glucosamine 6-phosphate. In terms of biological role, catalyzes the conversion of glucosamine-6-phosphate to glucosamine-1-phosphate. This Nitrosospira multiformis (strain ATCC 25196 / NCIMB 11849 / C 71) protein is Phosphoglucosamine mutase.